The primary structure comprises 103 residues: Large ribosomal subunit protein bL21 (103 aa).

Belongs to the bacterial ribosomal protein bL21 family. Part of the 50S ribosomal subunit. Contacts protein L20.

Functionally, this protein binds to 23S rRNA in the presence of protein L20. This chain is Large ribosomal subunit protein bL21, found in Actinobacillus pleuropneumoniae serotype 7 (strain AP76).